We begin with the raw amino-acid sequence, 508 residues long: p-aminobenzoyl-glutamate transport protein (508 aa).

The next 13 membrane-spanning stretches (helical) occupy residues 30-50 (FLLF…LSAF), 85-105 (FSGF…GLAE), 121-139 (VNAR…FSHI), 140-159 (SSDA…FLAV), 164-184 (VAGL…NLLI), 211-231 (IDNW…GGLI), 261-281 (GLRI…LMVI), 303-323 (GIVP…GIAT), 343-363 (MAGF…FNWS), 382-402 (LSGI…CMFI), 405-425 (GSAI…LLGF), 439-459 (SSVL…GFLQ), and 479-499 (LIFL…GLPI).

The protein localises to the cell inner membrane. It catalyses the reaction N-(4-aminobenzoyl)-L-glutamate(in) + H(+)(in) = N-(4-aminobenzoyl)-L-glutamate(out) + H(+)(out). With respect to regulation, completely inhibited by 100 nM sodium azide and by the proton ionophore carbonyl cyanide m-chlorophenylhydrazone (CCCP). Is also strongly inhibited by 100 mM potassium fluoride. Essential for aminobenzoyl-glutamate utilization. It catalyzes the concentration-dependent uptake of p-aminobenzoyl-glutamate (PABA-GLU) into the cell and allows accumulation of PABA-GLU to a concentration enabling AbgAB to catalyze cleavage into p-aminobenzoate and glutamate. It also seems to increase the sensitivity to low levels of aminobenzoyl-glutamate. May actually serve physiologically as a transporter for some other molecule, perhaps a dipeptide, and that it transports p-aminobenzoyl-glutamate as a secondary activity. The physiological role of abgABT should be clarified. This is p-aminobenzoyl-glutamate transport protein from Escherichia coli (strain K12).